Consider the following 405-residue polypeptide: Magnesium-protoporphyrin IX monomethyl ester [oxidative] cyclase, chloroplastic (405 aa).

Residues M1 to K43 constitute a chloroplast transit peptide.

This sequence belongs to the AcsF family. It depends on Fe cation as a cofactor.

The protein localises to the plastid. It is found in the chloroplast. The catalysed reaction is Mg-protoporphyrin IX 13-monomethyl ester + 3 NADPH + 3 O2 + 2 H(+) = 3,8-divinyl protochlorophyllide a + 3 NADP(+) + 5 H2O. The protein operates within porphyrin-containing compound metabolism; chlorophyll biosynthesis. In terms of biological role, catalyzes the formation of the isocyclic ring in chlorophyll biosynthesis. Mediates the cyclase reaction, which results in the formation of divinylprotochlorophyllide (Pchlide) characteristic of all chlorophylls from magnesium-protoporphyrin IX 13-monomethyl ester (MgPMME). The polypeptide is Magnesium-protoporphyrin IX monomethyl ester [oxidative] cyclase, chloroplastic (CRD1) (Gossypium hirsutum (Upland cotton)).